A 209-amino-acid chain; its full sequence is Small ribosomal subunit protein mS23 (209 aa).

The protein belongs to the mitochondrion-specific ribosomal protein mS23 family. As to quaternary structure, component of the mitochondrial small ribosomal subunit.

It localises to the mitochondrion. This Sclerotinia sclerotiorum (strain ATCC 18683 / 1980 / Ss-1) (White mold) protein is Small ribosomal subunit protein mS23 (rsm25).